We begin with the raw amino-acid sequence, 560 residues long: MNIDVATLLSQNDILLLFVVLALGLFIAKVKIGSFQLGSSIGVLITALFMGSLGYTFTADSLNIGFMLFIFCVGIEAGPNFFGIFLRDGKHYLLLVLVVLISAISLSFLTGYYFNLDYGLSTGMMAGALTATPVLVGAKDALNSGLAVLPEGVDFSKVMDNLSVGYAFSYLIGLTSLILLARLLPQLQKQNLQDSAMQIAQERGIGSAGQRKVYLPIIRAYRVGQELIDWTDGKNLRELGIHRQTGCHIERIRRNGILANPDGDYILQQGDEIALVGYPDSHARLDSSFRNGKEVFDRNLLDLRIAEEEIVVKNDNIAGKRLSELNLSEYGCFLNRVVRAQIEMPIEHDIVLAKGDILQVSGEKSKVHHIADKIGFISIHSQVSDLLAFCSFFILGIMFGMITMSFGQVTFGLGNAVGLLISGITLGFLRANHPTFGYVPQGALNMTKNLGLLVFMVGIGLSAGGNIIEYFSEDGLKVLAAALIVSVIPVILAYLVGAYILKMNRALLIGAIIGARTCGPAMDVVNEHARSTIPALGYAGTYAIANILMTVAGTIMILLA.

5 helical membrane-spanning segments follow: residues 14–34 (ILLL…KIGS), 37–57 (LGSS…GYTF), 66–86 (FMLF…GIFL), 94–114 (LLVL…GYYF), and 161–181 (NLSV…ILLA). 2 RCK C-terminal domains span residues 203 to 292 (RGIG…FRNG) and 293 to 376 (KEVF…KIGF). The next 5 helical transmembrane spans lie at 386-406 (LLAF…TMSF), 409-429 (VTFG…LGFL), 451-471 (GLLV…IEYF), 478-498 (VLAA…LVGA), and 539-559 (AGTY…MILL).

Belongs to the AAE transporter (TC 2.A.81) family. YbjL subfamily.

It is found in the cell membrane. The polypeptide is Putative transport protein VSAL_I2029 (Aliivibrio salmonicida (strain LFI1238) (Vibrio salmonicida (strain LFI1238))).